A 438-amino-acid polypeptide reads, in one-letter code: Protein pop-1 (438 aa).

The disordered stretch occupies residues 1–39; that stretch reads MMADEELGDEVKVFRRDEDADDDPMISGETSEQQLADDK. Positions 1–45 are sufficient for interaction with beta-catenin/sys-1; it reads MMADEELGDEVKVFRRDEDADDDPMISGETSEQQLADDKKEAVME. Positions 9-18 are enriched in basic and acidic residues; sequence DEVKVFRRDE. The tract at residues 88–130 is involved in nuclear asymmetry; it reads AALPMFMPLFMNPYAAALRSPSLMFPMGAMSPTFPMFPPSPVY. Phosphoserine; by LIT1 is present on residues serine 118 and serine 127. A DNA-binding region (HMG box) is located at residues 192-262; sequence VKKPLNAFMW…THKERYPEWS (71 aa). A compositionally biased stretch (basic and acidic residues) spans 250-263; the sequence is DKETHKERYPEWSA. Disordered stretches follow at residues 250–288, 318–351, and 378–438; these read DKET…ENND, TDRS…PKAN, and TTGA…MCTI. A compositionally biased stretch (basic residues) spans 270–279; the sequence is NKKKTKKRRD. Polar residues-rich tracts occupy residues 324–339 and 378–395; these read SDIT…SGAY and TTGA…SSAG. Positions 406-418 are enriched in acidic residues; sequence SESDVEEEEDEQI.

Belongs to the TCF/LEF family. As to quaternary structure, interacts (via N-terminal region) with beta-catenin homolog sys-1. Interacts with hda-1. Interacts with bar-1. Interacts with par-5; the interaction is direct and is enhanced by lit-1-mediated pop-1 phosphorylation. The interaction also leads to the subsequent nuclear export of pop-1. Interacts (when phosphorylated on Ser-118 and Ser-127) with lit-1; the interaction is dependent on the beta-catenin-lit-1 complex. Interacts with wrm-1. Interacts with homeobox protein egl-5. Interacts with zinc finger transcription factor ref-2; the interaction is direct and facilitates transcriptional activation; transcription may be repressed by beta-catenin/sys-1. Phosphorylated on Ser-118 and Ser-127 by lit-1 in the beta-catenin-lit-1 complex. Phosphorylation promotes the interaction of pop-1 and par-5 and the subsequent translocation of pop-1 from the nucleus to the cytoplasm.

The protein resides in the nucleus. Its subcellular location is the cytoplasm. Functionally, transcription factor. Part of the Wnt signaling asymmetry pathway. Binds to the consensus sequence, 5'-(C/T)TTTG(A/T)(A/T)(G/C)-3'. Activates or represses target gene expression, depending on upstream Wnt signals and interactions with transcription co-regulators, such as beta-catenin/sys-1 or zinc finger transcription factor ref-2. Essential for the specification of the mesodermal and endodermal cell fates in early embryos. Required in many asymmetrical cell divisions in the early embryo and during larval development. Reciprocal distribution patterns of sys-1 and pop-1 in the daughters of anterior-posterior cell divisions functions in specifying cell fate; a higher sys-1 to pop-1 ratio promotes the posterior cell fate, whereas a low sys-1 to pop-1 ratio promotes the anterior fate. Involved in modulating nuclear localization or nuclear retention of sys-1. Involved in the terminal asymmetrical division of many embryonic neuroblasts; for example in the SMDD/AIY neuron lineage. In complex with ref-2, positively modulates expression of LIM/homeobox protein ttx-3 in anterior daughter cells of the SMDD/AIY lineage. Required for asymmetrical division of somatic gonadal precursor descendants which initiate axis formation required to control organ shape. Similarly, involved in asymmetrical division of seam cells, a stem cell-like lineage. Represses expression of target genes via its interaction with hda-1 histone deacetylase. Required for specification of the M lineage-derived coelomocyte and sex myoblast fate. Regulates coelomocyte fate by positively regulating proliferation and ceh-34 and possibly eya-1 expression in M.dlpa and M.drpa precursors. This chain is Protein pop-1, found in Caenorhabditis elegans.